The sequence spans 94 residues: Acylphosphatase (94 aa).

Positions 7–94 constitute an Acylphosphatase-like domain; the sequence is AVQARVYGRV…TAPGDFRIVA (88 aa). Active-site residues include Arg22 and Asn40.

It belongs to the acylphosphatase family.

It carries out the reaction an acyl phosphate + H2O = a carboxylate + phosphate + H(+). This chain is Acylphosphatase (acyP), found in Mesorhizobium japonicum (strain LMG 29417 / CECT 9101 / MAFF 303099) (Mesorhizobium loti (strain MAFF 303099)).